The primary structure comprises 191 residues: Calcium-binding protein CML42 (191 aa).

EF-hand domains are found at residues 25 to 60 (LNALRLQRIFDLFDKNGDGFITVEELSQALTRLGLN), 116 to 151 (ENESDLAEAFKVFDENGDGFISARELQTVLKKLGLP), and 154 to 189 (GEMERVEKMIVSVDRNQDGRVDFFEFKNMMRTVVIP). Ca(2+) is bound by residues D38, N40, D42, E49, D129, N131, D133, E140, D167, N169, D171, R173, and E178.

In terms of assembly, interacts with KIC. In terms of tissue distribution, expressed in seedling shoots, roots, rosette leaves and flowers. Expressed in the leaf trichome support cells.

Probable calcium sensor that binds calcium in vitro. Involved in the regulation of trichome branching. The protein is Calcium-binding protein CML42 (CML42) of Arabidopsis thaliana (Mouse-ear cress).